The following is a 338-amino-acid chain: tRNA N6-adenosine threonylcarbamoyltransferase (338 aa).

Fe cation is bound by residues histidine 111 and histidine 115. Substrate is bound by residues 134–138 (LVSGG), aspartate 167, glycine 180, and asparagine 272. Aspartate 300 is a binding site for Fe cation.

The protein belongs to the KAE1 / TsaD family. It depends on Fe(2+) as a cofactor.

Its subcellular location is the cytoplasm. It carries out the reaction L-threonylcarbamoyladenylate + adenosine(37) in tRNA = N(6)-L-threonylcarbamoyladenosine(37) in tRNA + AMP + H(+). Its function is as follows. Required for the formation of a threonylcarbamoyl group on adenosine at position 37 (t(6)A37) in tRNAs that read codons beginning with adenine. Is involved in the transfer of the threonylcarbamoyl moiety of threonylcarbamoyl-AMP (TC-AMP) to the N6 group of A37, together with TsaE and TsaB. TsaD likely plays a direct catalytic role in this reaction. This Aliivibrio fischeri (strain MJ11) (Vibrio fischeri) protein is tRNA N6-adenosine threonylcarbamoyltransferase.